The primary structure comprises 316 residues: Olfactory receptor 2G6 (316 aa).

Over 1 to 25 (MEETNNSSEKGFLLLGFSDQPQLER) the chain is Extracellular. N-linked (GlcNAc...) asparagine glycosylation is found at Asn5 and Asn6. A helical membrane pass occupies residues 26–49 (FLFAIILYFYVLSLLGNTALILVC). The Cytoplasmic segment spans residues 50 to 57 (CLDSRLHT). Residues 58–79 (PMYFFLSNLSCVDICFTTSVAP) traverse the membrane as a helical segment. Over 80-100 (QLLVTMNKKDKTMSYGGCVAQ) the chain is Extracellular. A disulfide bridge connects residues Cys97 and Cys189. Residues 101 to 120 (LYVAMGLGSSECILLAVMAY) form a helical membrane-spanning segment. At 121 to 139 (DRYAAVCRPLRYIAIMHPR) the chain is on the cytoplasmic side. The helical transmembrane segment at 140–158 (FCASLAGGAWLSGLITSLI) threads the bilayer. The Extracellular portion of the chain corresponds to 159 to 195 (QCSLTVQLPLCGHRTLDHIFCEVPVLIKLACVDTTFN). Residues 196–219 (EAELFVASVVFLIVPVLLILVSYG) traverse the membrane as a helical segment. Topologically, residues 220-236 (FITQAVLRIKSAAGRQK) are cytoplasmic. The chain crosses the membrane as a helical span at residues 237–259 (AFGTCSSHLVVVIIFYGTIIFMY). Topologically, residues 260–272 (LQPANRRSKNQGK) are extracellular. A helical membrane pass occupies residues 273–292 (FVSLFYTIVTPLLNPIIYTL). Residues 293 to 316 (RNKDVKGALRTLILGSAAGQSHKD) are Cytoplasmic-facing.

Belongs to the G-protein coupled receptor 1 family.

It is found in the cell membrane. Odorant receptor. The sequence is that of Olfactory receptor 2G6 (OR2G6) from Homo sapiens (Human).